The chain runs to 620 residues: 1-deoxy-D-xylulose-5-phosphate synthase (620 aa).

Thiamine diphosphate-binding positions include His-80 and 121–123 (GHS). Asp-152 contributes to the Mg(2+) binding site. Residues 153–154 (GA), Asn-181, Tyr-288, and Glu-370 each bind thiamine diphosphate. Residue Asn-181 coordinates Mg(2+).

The protein belongs to the transketolase family. DXPS subfamily. As to quaternary structure, homodimer. The cofactor is Mg(2+). Requires thiamine diphosphate as cofactor.

It carries out the reaction D-glyceraldehyde 3-phosphate + pyruvate + H(+) = 1-deoxy-D-xylulose 5-phosphate + CO2. Its pathway is metabolic intermediate biosynthesis; 1-deoxy-D-xylulose 5-phosphate biosynthesis; 1-deoxy-D-xylulose 5-phosphate from D-glyceraldehyde 3-phosphate and pyruvate: step 1/1. Functionally, catalyzes the acyloin condensation reaction between C atoms 2 and 3 of pyruvate and glyceraldehyde 3-phosphate to yield 1-deoxy-D-xylulose-5-phosphate (DXP). This chain is 1-deoxy-D-xylulose-5-phosphate synthase, found in Salmonella paratyphi A (strain ATCC 9150 / SARB42).